Here is a 428-residue protein sequence, read N- to C-terminus: GTPase Obg (428 aa).

In terms of domain architecture, Obg spans 1-158 (MFVDQVKVYV…RYIVLELKVL (158 aa)). The interval 117–143 (AKGGRGGRGNTRFATPANPAPQLSEHG) is disordered. Residues 159–329 (ADVGLVGFPS…LLFEVANQLE (171 aa)) form the OBG-type G domain. Residues 165–172 (GFPSVGKS), 190–194 (FTTLV), 212–215 (DLPG), 282–285 (NKMD), and 310–312 (SAV) each bind GTP. Residues S172 and T192 each contribute to the Mg(2+) site. Positions 350–428 (TMEDEEIPFN…LLEFEFEFID (79 aa)) constitute an OCT domain.

The protein belongs to the TRAFAC class OBG-HflX-like GTPase superfamily. OBG GTPase family. In terms of assembly, monomer. It depends on Mg(2+) as a cofactor.

The protein localises to the cytoplasm. In terms of biological role, an essential GTPase which binds GTP, GDP and possibly (p)ppGpp with moderate affinity, with high nucleotide exchange rates and a fairly low GTP hydrolysis rate. Plays a role in control of the cell cycle, stress response, ribosome biogenesis and in those bacteria that undergo differentiation, in morphogenesis control. The chain is GTPase Obg from Bacillus velezensis (strain DSM 23117 / BGSC 10A6 / LMG 26770 / FZB42) (Bacillus amyloliquefaciens subsp. plantarum).